A 634-amino-acid chain; its full sequence is Threonine--tRNA ligase (634 aa).

Positions 1–61 (MINIRFPDGS…NSNCELRLIT (61 aa)) constitute a TGS domain. Residues 241–532 (DHRKIGKVLD…LIEHYAGNLP (292 aa)) are catalytic. The Zn(2+) site is built by C332, H383, and H509.

Belongs to the class-II aminoacyl-tRNA synthetase family. In terms of assembly, homodimer. Zn(2+) is required as a cofactor.

It is found in the cytoplasm. The catalysed reaction is tRNA(Thr) + L-threonine + ATP = L-threonyl-tRNA(Thr) + AMP + diphosphate + H(+). Its function is as follows. Catalyzes the attachment of threonine to tRNA(Thr) in a two-step reaction: L-threonine is first activated by ATP to form Thr-AMP and then transferred to the acceptor end of tRNA(Thr). Also edits incorrectly charged L-seryl-tRNA(Thr). The polypeptide is Threonine--tRNA ligase (Francisella tularensis subsp. tularensis (strain FSC 198)).